Here is a 141-residue protein sequence, read N- to C-terminus: ATP synthase epsilon chain (141 aa).

The protein belongs to the ATPase epsilon chain family. In terms of assembly, F-type ATPases have 2 components, CF(1) - the catalytic core - and CF(0) - the membrane proton channel. CF(1) has five subunits: alpha(3), beta(3), gamma(1), delta(1), epsilon(1). CF(0) has three main subunits: a, b and c.

The protein localises to the cell inner membrane. Functionally, produces ATP from ADP in the presence of a proton gradient across the membrane. The sequence is that of ATP synthase epsilon chain from Burkholderia cenocepacia (strain ATCC BAA-245 / DSM 16553 / LMG 16656 / NCTC 13227 / J2315 / CF5610) (Burkholderia cepacia (strain J2315)).